The chain runs to 329 residues: Sialic acid-binding periplasmic protein SiaP (329 aa).

An N-terminal signal peptide occupies residues M1–A23. N-acetyl-beta-neuraminate-binding residues include N33, D72, E90, R150, R170, and N210.

The protein belongs to the bacterial solute-binding protein 7 family. In terms of assembly, the complex comprises the extracytoplasmic solute receptor protein SiaP, and the fused transmembrane protein SiaT.

It localises to the periplasm. Its function is as follows. Part of the tripartite ATP-independent periplasmic (TRAP) transport system SiaPT involved in the uptake of sialic acid (N-acetyl-beta-neuraminate). This protein specifically binds sialic acid with high affinity. N-Acetylneuraminate (sialic acid) can then be incorporated into the lipooligosaccharides (LOS) as a terminal non-reducing sugar, protecting the bacterium from complement-mediated killing by normal human serum. This chain is Sialic acid-binding periplasmic protein SiaP (siaP), found in Haemophilus influenzae (strain ATCC 51907 / DSM 11121 / KW20 / Rd).